Reading from the N-terminus, the 291-residue chain is Elongation factor Ts (291 aa).

The tract at residues 79 to 82 (TDFV) is involved in Mg(2+) ion dislocation from EF-Tu.

Belongs to the EF-Ts family.

Its subcellular location is the cytoplasm. Associates with the EF-Tu.GDP complex and induces the exchange of GDP to GTP. It remains bound to the aminoacyl-tRNA.EF-Tu.GTP complex up to the GTP hydrolysis stage on the ribosome. The polypeptide is Elongation factor Ts (Ruegeria sp. (strain TM1040) (Silicibacter sp.)).